Consider the following 315-residue polypeptide: Epithelial cell adhesion molecule (315 aa).

The signal sequence occupies residues M1–A23. Topologically, residues Q24–T266 are extracellular. Cystine bridges form between C27-C46, C29-C59, C38-C48, C66-C99, C110-C116, and C118-C135. The Thyroglobulin type-1 domain maps to A63–C135. An N-linked (GlcNAc...) asparagine glycan is attached at N111. N198 is a glycosylation site (N-linked (GlcNAc...) asparagine). The chain crosses the membrane as a helical span at residues A267 to I289. Residues S290–A315 lie on the Cytoplasmic side of the membrane.

The protein belongs to the EPCAM family. Monomer. Interacts with phosphorylated CLDN7. In terms of processing, glycosylation at Asn-198 is crucial for protein stability.

It localises to the lateral cell membrane. The protein localises to the cell junction. Its subcellular location is the tight junction. May act as a physical homophilic interaction molecule between intestinal epithelial cells (IECs) and intraepithelial lymphocytes (IELs) at the mucosal epithelium for providing immunological barrier as a first line of defense against mucosal infection. Plays a role in embryonic stem cells proliferation and differentiation. Up-regulates the expression of FABP5, MYC and cyclins A and E. The sequence is that of Epithelial cell adhesion molecule (Epcam) from Mus musculus (Mouse).